We begin with the raw amino-acid sequence, 257 residues long: tRNA-cytidine(32) 2-sulfurtransferase (257 aa).

Positions 37–42 match the PP-loop motif motif; it reads SGGKDS. C112, C115, and C202 together coordinate [4Fe-4S] cluster.

It belongs to the TtcA family. As to quaternary structure, homodimer. It depends on Mg(2+) as a cofactor. [4Fe-4S] cluster is required as a cofactor.

Its subcellular location is the cytoplasm. The catalysed reaction is cytidine(32) in tRNA + S-sulfanyl-L-cysteinyl-[cysteine desulfurase] + AH2 + ATP = 2-thiocytidine(32) in tRNA + L-cysteinyl-[cysteine desulfurase] + A + AMP + diphosphate + H(+). It participates in tRNA modification. Its function is as follows. Catalyzes the ATP-dependent 2-thiolation of cytidine in position 32 of tRNA, to form 2-thiocytidine (s(2)C32). The sulfur atoms are provided by the cysteine/cysteine desulfurase (IscS) system. In Geobacter sulfurreducens (strain ATCC 51573 / DSM 12127 / PCA), this protein is tRNA-cytidine(32) 2-sulfurtransferase.